The sequence spans 346 residues: Dihydroorotase (346 aa).

Histidine 14 and histidine 16 together coordinate Zn(2+). Substrate contacts are provided by residues 16–18 (HLR) and asparagine 42. Positions 100, 137, and 175 each coordinate Zn(2+). N6-carboxylysine is present on lysine 100. A substrate-binding site is contributed by histidine 137. Substrate is bound at residue leucine 220. A Zn(2+)-binding site is contributed by aspartate 248. Residue aspartate 248 is part of the active site. 2 residues coordinate substrate: histidine 252 and alanine 264.

Belongs to the metallo-dependent hydrolases superfamily. DHOase family. Class II DHOase subfamily. Homodimer. Zn(2+) is required as a cofactor.

The enzyme catalyses (S)-dihydroorotate + H2O = N-carbamoyl-L-aspartate + H(+). Its pathway is pyrimidine metabolism; UMP biosynthesis via de novo pathway; (S)-dihydroorotate from bicarbonate: step 3/3. In terms of biological role, catalyzes the reversible cyclization of carbamoyl aspartate to dihydroorotate. This is Dihydroorotase from Ruegeria pomeroyi (strain ATCC 700808 / DSM 15171 / DSS-3) (Silicibacter pomeroyi).